The primary structure comprises 70 residues: DNA-directed RNA polymerase subunit omega (70 aa).

It belongs to the RNA polymerase subunit omega family. In terms of assembly, the RNAP catalytic core consists of 2 alpha, 1 beta, 1 beta' and 1 omega subunit. When a sigma factor is associated with the core the holoenzyme is formed, which can initiate transcription.

It carries out the reaction RNA(n) + a ribonucleoside 5'-triphosphate = RNA(n+1) + diphosphate. In terms of biological role, promotes RNA polymerase assembly. Latches the N- and C-terminal regions of the beta' subunit thereby facilitating its interaction with the beta and alpha subunits. In Thermoanaerobacter sp. (strain X514), this protein is DNA-directed RNA polymerase subunit omega.